A 321-amino-acid chain; its full sequence is MIFVTLEHILTHISFSIISIVITIHLMTLLIHKIAGLCDSSEKGIISTFFSITGLLITRWIYSGHFPLSNLYESLIFLSWSFSIIHMIPYLRNHKNDLSVITVPSVIFTQGFVTSCLSTEMRQSAILVPALKSQWLIMHVSMMLLSYATLLCGSLLSVALLVITFRKNMDIFCKRKNFLIKSFFFAETEYLNKKRSVFKNTSFLSFRNYYKYQLTQRLDYWTYRIISLGFIFLTMGILSGAVWANEAWGSYWNWDPKETWAFITWTIFAIYSHIRININFQGTNPALVASIGFLIIWICYFGINLLGIGLHSYGSFTLPSN.

The next 8 helical transmembrane spans lie at 9–29, 44–64, 71–91, 98–118, 143–163, 225–245, 260–280, and 288–308; these read ILTHISFSIISIVITIHLMTL, GIISTFFSITGLLITRWIYSG, LYESLIFLSWSFSIIHMIPYL, LSVITVPSVIFTQGFVTSCLS, MLLSYATLLCGSLLSVALLVI, IISLGFIFLTMGILSGAVWAN, WAFITWTIFAIYSHIRININF, and VASIGFLIIWICYFGINLLGI.

It belongs to the CcmF/CycK/Ccl1/NrfE/CcsA family. As to quaternary structure, may interact with Ccs1.

The protein localises to the plastid. The protein resides in the chloroplast thylakoid membrane. Functionally, required during biogenesis of c-type cytochromes (cytochrome c6 and cytochrome f) at the step of heme attachment. This is Cytochrome c biogenesis protein CcsA from Dioscorea elephantipes (Elephant's foot yam).